We begin with the raw amino-acid sequence, 360 residues long: Putative transport protein BU123 (360 aa).

9 helical membrane passes run 18–38, 39–59, 66–86, 161–181, 204–224, 230–250, 251–271, 280–300, and 316–336; these read IFIV…ILGF, FWAS…QKIL, AVII…FFLV, GLFI…YWNG, LLLA…TALI, GIGL…IIFF, SCLI…WLYW, ILLI…PFFI, and IGGL…VLVI.

The protein belongs to the autoinducer-2 exporter (AI-2E) (TC 2.A.86) family.

It localises to the cell membrane. This Buchnera aphidicola subsp. Acyrthosiphon pisum (strain APS) (Acyrthosiphon pisum symbiotic bacterium) protein is Putative transport protein BU123.